The primary structure comprises 312 residues: Probable carboxylesterase 7 (312 aa).

An N-acetylmethionine modification is found at M1. The Involved in the stabilization of the negatively charged intermediate by the formation of the oxyanion hole signature appears at 75-77; it reads HGG. Catalysis depends on residues S159, D255, and H287.

Belongs to the 'GDXG' lipolytic enzyme family. Expressed in leaves, stems, flowers and siliques.

It catalyses the reaction a carboxylic ester + H2O = an alcohol + a carboxylate + H(+). Functionally, carboxylesterase acting on esters with varying acyl chain length. The protein is Probable carboxylesterase 7 (CXE7) of Arabidopsis thaliana (Mouse-ear cress).